The chain runs to 441 residues: Putative F-box/FBD/LRR-repeat protein At4g00315 (441 aa).

The region spanning 1 to 47 is the F-box domain; that stretch reads MDKTSQLPDELLVKVLSFLPTKDAVRTSLLSMRWKSLWMWLPKLEYD. LRR repeat units follow at residues 57 to 82, 87 to 115, 137 to 164, 165 to 190, 211 to 236, 243 to 271, 293 to 318, and 319 to 344; these read QGLA…SLKL, IGSI…SLKL, ILKL…FLGR, VTYS…VVER, LKMS…KVTD, SDNE…DFVL, LGVY…KICS, and CDSD…EAYV. The FBD domain maps to 358 to 410; that stretch reads QWGNQLNCVPKCLLSSLETFKWSEMYGLLQNQMDVAKYILRNARCLKSATIFF.

The chain is Putative F-box/FBD/LRR-repeat protein At4g00315 from Arabidopsis thaliana (Mouse-ear cress).